The sequence spans 1218 residues: Coatomer subunit alpha-2 (1218 aa).

WD repeat units lie at residues 7-48 (TKSN…DRFD), 49-88 (EHEG…CLFT), 91-132 (GHLD…SVLT), 133-172 (GHNH…KKSA), 202-241 (GHDR…AWEV), 246-285 (GHMN…GIQT), 288-326 (REHD…PAFA), and 363-404 (SLNQ…VGRS). Residues 826–849 (NRGAVDEEEEDVEGDWGEGLDKFD) are disordered. Residues 831–843 (DEEEEDVEGDWGE) are compositionally biased toward acidic residues.

As to quaternary structure, oligomeric complex that consists of at least the alpha, beta, beta', gamma, delta, epsilon and zeta subunits.

Its subcellular location is the cytoplasm. It is found in the golgi apparatus membrane. The protein resides in the cytoplasmic vesicle. It localises to the COPI-coated vesicle membrane. Functionally, the coatomer is a cytosolic protein complex that binds to dilysine motifs and reversibly associates with Golgi non-clathrin-coated vesicles, which further mediate biosynthetic protein transport from the ER, via the Golgi up to the trans Golgi network. Coatomer complex is required for budding from Golgi membranes, and is essential for the retrograde Golgi-to-ER transport of dilysine-tagged proteins. The sequence is that of Coatomer subunit alpha-2 from Arabidopsis thaliana (Mouse-ear cress).